We begin with the raw amino-acid sequence, 414 residues long: Transmembrane protein 184A (414 aa).

Positions 1 to 32 (MTDTPGLLGTPLAWTPPARPAGPQMERAGNGS) are disordered. Helical transmembrane passes span 48–68 (VSGV…YLHL), 83–103 (LLFI…LLGG), 120–140 (FVIY…SAIM), 177–197 (LQFC…QAFG), 211–231 (LYIT…LFLF), 248–268 (FLTI…LAIL), and 290–310 (VAAG…SIAL). Disordered regions lie at residues 323-342 (TESS…GLKE) and 364-414 (YTQQ…AEEL). Residues 379–388 (SVPSPRTPTH) show a composition bias toward polar residues.

It belongs to the TMEM184 family. As to expression, expressed in vascular cells (at protein level).

It localises to the cell membrane. It is found in the cytoplasm. Its subcellular location is the perinuclear region. The protein localises to the cytoplasmic vesicle membrane. The protein resides in the early endosome membrane. It localises to the endosome. It is found in the cytoplasmic vesicle. Its subcellular location is the secretory vesicle membrane. Its function is as follows. Acts as a heparin receptor in vascular cells. May be involved in vesicle transport in exocrine cells and Sertoli cells. This chain is Transmembrane protein 184A (TMEM184A), found in Bos taurus (Bovine).